We begin with the raw amino-acid sequence, 393 residues long: Na(+)/H(+) antiporter NhaA 2 (393 aa).

Helical transmembrane passes span 18 to 38 (SGGL…NSQL), 53 to 73 (LSVQ…MVGL), 91 to 111 (ILPG…YLAF), 120 to 140 (GWAI…SLLG), 149 to 169 (VFLA…IGLF), 172 to 192 (TGVS…LVAL), 208 to 228 (LVLW…GVLL), 263 to 283 (FIIV…GLGM), 294 to 314 (VAAG…LLLV), 332 to 352 (GTTL…LLAF), and 363 to 383 (IGIL…LRFS).

The protein belongs to the NhaA Na(+)/H(+) (TC 2.A.33) antiporter family.

The protein localises to the cell inner membrane. The enzyme catalyses Na(+)(in) + 2 H(+)(out) = Na(+)(out) + 2 H(+)(in). In terms of biological role, na(+)/H(+) antiporter that extrudes sodium in exchange for external protons. This is Na(+)/H(+) antiporter NhaA 2 from Brucella anthropi (strain ATCC 49188 / DSM 6882 / CCUG 24695 / JCM 21032 / LMG 3331 / NBRC 15819 / NCTC 12168 / Alc 37) (Ochrobactrum anthropi).